We begin with the raw amino-acid sequence, 92 residues long: Acylphosphatase (92 aa).

In terms of domain architecture, Acylphosphatase-like spans 5–92 (YIVAYVYGVV…TPFETFSIRY (88 aa)). Residues Arg20 and Asn38 contribute to the active site.

The protein belongs to the acylphosphatase family.

It catalyses the reaction an acyl phosphate + H2O = a carboxylate + phosphate + H(+). This chain is Acylphosphatase (acyP), found in Yersinia pseudotuberculosis serotype O:1b (strain IP 31758).